The sequence spans 205 residues: Mediator of RNA polymerase II transcription subunit 29 (205 aa).

Over residues 1–27 the composition is skewed to low complexity; it reads MNPNMNMMQMSGPPMMQVSPMMQSSPQ. The disordered stretch occupies residues 1–65; the sequence is MNPNMNMMQM…QQQQQQAEKL (65 aa). The segment covering 28–38 has biased composition (pro residues); sequence PMMPTGPPGPV. The segment covering 39–61 has biased composition (low complexity); that stretch reads PMQQQHQQQQQQQQQQQQQQQQQ.

This sequence belongs to the Mediator complex subunit 29 family. Component of the Mediator complex.

Its subcellular location is the nucleus. In terms of biological role, component of the Mediator complex, a coactivator involved in the regulated transcription of nearly all RNA polymerase II-dependent genes. Mediator functions as a bridge to convey information from gene-specific regulatory proteins to the basal RNA polymerase II transcription machinery. Mediator is recruited to promoters by direct interactions with regulatory proteins and serves as a scaffold for the assembly of a functional preinitiation complex with RNA polymerase II and the general transcription factors. The polypeptide is Mediator of RNA polymerase II transcription subunit 29 (ix) (Drosophila virilis (Fruit fly)).